We begin with the raw amino-acid sequence, 523 residues long: Glucose-1-phosphate adenylyltransferase large subunit 1, chloroplastic/amyloplastic (523 aa).

The N-terminal 49 residues, 1-49, are a transit peptide targeting the chloroplast; it reads MSSMQFSSVLPLEGKACVSPVRREGSACERLKIGDSSSIRHERASRRMC.

It belongs to the bacterial/plant glucose-1-phosphate adenylyltransferase family. As to quaternary structure, heterotetramer. In terms of tissue distribution, starchy endosperm and roots.

Its subcellular location is the plastid. The protein resides in the chloroplast. The protein localises to the amyloplast. The catalysed reaction is alpha-D-glucose 1-phosphate + ATP + H(+) = ADP-alpha-D-glucose + diphosphate. The protein operates within glycan biosynthesis; starch biosynthesis. Highly active without 3'phosphoglycerate, and is only slightly affected by the activator 3'phosphoglycerate and inhibitor orthophosphate. In terms of biological role, this protein plays a role in synthesis of starch. It catalyzes the synthesis of the activated glycosyl donor, ADP-glucose from Glc-1-P and ATP. The polypeptide is Glucose-1-phosphate adenylyltransferase large subunit 1, chloroplastic/amyloplastic (Hordeum vulgare (Barley)).